The primary structure comprises 888 residues: Probable disease resistance protein At5g63020 (888 aa).

Residues 22-66 (LNRNGDYIHGLEENLTALQRALEQIEQRREDLLRKILSEERRGLQ) are a coiled coil. One can recognise an NB-ARC domain in the interval 139 to 442 (AERVDAARVE…GEGFIDRNKG (304 aa)). 181–188 (GMGGVGKT) is an ATP binding site. 5 LRR repeats span residues 512–533 (VARRVSLMFNNIESIRDAPESP), 534–555 (QLITLLLRKNFLGHISSSFFRL), 558–580 (MLVVLDLSMNRDLRHLPNEISEC), 582–604 (SLQYLSLSRTRIRIWPAGLVELR), and 605–627 (KLLYLNLEYTRMVESICGISGLT).

The protein belongs to the disease resistance NB-LRR family.

Probable disease resistance protein. The polypeptide is Probable disease resistance protein At5g63020 (Arabidopsis thaliana (Mouse-ear cress)).